The sequence spans 227 residues: Phosphatidylethanolamine-binding protein 4 (227 aa).

A signal peptide spans 1–22 (MGWTMRLVTAALLLGLMMVVTG). N-linked (GlcNAc...) (complex) asparagine glycosylation occurs at Asn169. Residues 188 to 227 (EPEASTQFMTQNYQDSPTLQAPRERASEPKHKNQAEIAAC) form an important for secretion region. The disordered stretch occupies residues 202–227 (DSPTLQAPRERASEPKHKNQAEIAAC). Residues 209 to 221 (PRERASEPKHKNQ) are compositionally biased toward basic and acidic residues.

It belongs to the phosphatidylethanolamine-binding protein family.

Its subcellular location is the secreted. In terms of biological role, promotes AKT phosphorylation, suggesting a possible role in the PI3K-AKT signaling pathway. This chain is Phosphatidylethanolamine-binding protein 4 (PEBP4), found in Homo sapiens (Human).